Consider the following 415-residue polypeptide: Gamma-glutamyl phosphate reductase (415 aa).

The protein belongs to the gamma-glutamyl phosphate reductase family.

Its subcellular location is the cytoplasm. It carries out the reaction L-glutamate 5-semialdehyde + phosphate + NADP(+) = L-glutamyl 5-phosphate + NADPH + H(+). The protein operates within amino-acid biosynthesis; L-proline biosynthesis; L-glutamate 5-semialdehyde from L-glutamate: step 2/2. In terms of biological role, catalyzes the NADPH-dependent reduction of L-glutamate 5-phosphate into L-glutamate 5-semialdehyde and phosphate. The product spontaneously undergoes cyclization to form 1-pyrroline-5-carboxylate. The polypeptide is Gamma-glutamyl phosphate reductase (Xylella fastidiosa (strain 9a5c)).